The following is a 295-amino-acid chain: MMSWAAARLTETAARCFRARCLGFRVGPWCVSQHENSSYGAAPHRTLRVSAVAFAGHNKWSKVRHIKGPKDMERSRIFSKLTLSIRLAVKEGGPNPENNSSLANILEVCRSKNMPKSTIESALKSEKNKGIYLLYEGRGPGGSSLLIEALSNSGPKCHLEIKYILNKNGGMMTEGARHFFDKKGVVVVGVEDREKKAVNLERALELAIEAGAEDVREAEDEEEEKNLFKFICDASSLHQVRKKLDSLGLCSVSCSLEFIPHSKVQLSEPELEQAVHLIQALSNHEDVIHVYDNIE.

N6-acetyllysine is present on Lys162. The stretch at 190–225 (VEDREKKAVNLERALELAIEAGAEDVREAEDEEEEK) forms a coiled coil.

This sequence belongs to the TACO1 family.

It is found in the mitochondrion. Its function is as follows. Acts as a translational activator of mitochondrially-encoded cytochrome c oxidase 1. This Rattus norvegicus (Rat) protein is Translational activator of cytochrome c oxidase 1.